The chain runs to 919 residues: MAGTLLQPVALGTTFAGRVSGQRWKSHGTRRPPSMLAMSLSRPVKMAAFVGLRSVHSFSVTPVTNFRSTVASYRSRRGRRARFVTRSMFERFTEKAIKVIMLAQEEARRLGHNFVGTEQILLGLIGEGTGIAAKVLKSMGINLKDARVEVEKIIGRGNGFVAVEIPFTPRAKRVLELSLEEARQLGHNYIGSEHLLLGLLREGEGVAARVLESLGADPSNIRTQVIRMIGETTEAVGAGVGGGSSGNKMPTLEEYGTNLTKLAEEGKLDPVVGRQPQIERVVQILGRRTKNNPCLIGEPGVGKTAIAEGLAQRISTGDVPETIEGKKVITLDMGLLVAGTKYRGEFEERLKKLMEEIKQSDEIILFIDEVHTLIGAGAAEGAIDAANILKPALARGELQCIGATTLDEYRKHIEKDPALERRFQPVRVPEPTVDETIEILRGLRERYEIHHKLRYTDDALISAAKLSYQYISDRFLPDKAIDLIDEAGSRVRLRHAQVPEEARELDKELKQITKDKNEAVRSQDFEKAGELRDREMELKAQITALIDKSKEMSKAETESGETGPLVNEADIQHIVSSWTGIPVEKVSSDESDKLLKMEETLHQRVIGQDEAVKAISRSIRRARVGLKNPNRPIASFIFAGPTGVGKSELAKALAAYYFGSEEAMIRLDMSEFMERHTVSKLIGSPPGYVGYTEGGQLTEAVRRRPYTVVLFDEIEKAHPDVFNMMLQILEDGRLTDSKGRTVDFKNTLLIMTSNVGSSVIEKGGRKIGFDLDYDEKDSSYSRIKSLVVEEMKQYFRPEFLNRLDEMIVFRQLTKLEVKEIAEIMLKEVFDRLKAKDIDLQVTEKFKERIVDEGFNPSYGARPLRRAIMRLLEDSLAEKMLAGEVKEGDSAIVDVDSEGKVIVLNGQSGLPELSTPAVTV.

A chloroplast-targeting transit peptide spans 1–54 (MAGTLLQPVALGTTFAGRVSGQRWKSHGTRRPPSMLAMSLSRPVKMAAFVGLRS). Residues 89-231 (FERFTEKAIK…RTQVIRMIGE (143 aa)) enclose the Clp R domain. Repeat regions lie at residues 92–157 (FTEK…IGRG) and 167–231 (FTPR…MIGE). The segment at 252 to 499 (LEEYGTNLTK…RVRLRHAQVP (248 aa)) is i. An ATP-binding site is contributed by 297–304 (GEPGVGKT). One can recognise a UVR domain in the interval 506–541 (DKELKQITKDKNEAVRSQDFEKAGELRDREMELKAQ). Residues 566–757 (VNEADIQHIV…LLIMTSNVGS (192 aa)) form an II region. 640–647 (GPTGVGKS) serves as a coordination point for ATP.

It belongs to the ClpA/ClpB family. ClpC subfamily.

The protein localises to the plastid. Its subcellular location is the chloroplast. Its function is as follows. Molecular chaperone that may interact with a ClpP-like protease involved in degradation of denatured proteins in the chloroplast. The chain is Chaperone protein ClpC2, chloroplastic (CLPC2) from Oryza sativa subsp. japonica (Rice).